A 193-amino-acid polypeptide reads, in one-letter code: Phosphatidylglycerophosphatase and protein-tyrosine phosphatase 1 (193 aa).

The N-terminal 31 residues, methionine 1–glycine 31, are a transit peptide targeting the mitochondrion. The region spanning tryptophan 37–alanine 188 is the Tyrosine-protein phosphatase domain. Lysine 85 carries the N6-succinyllysine modification. The active-site Phosphocysteine intermediate is cysteine 132.

Belongs to the protein-tyrosine phosphatase family. Non-receptor class dual specificity subfamily. Interacts with STYXL1; the interaction inhibits PTPMT1 catalytic activity. As to expression, predominantly expressed in testis. Expressed at lower level in heart, brain, spleen, lung, liver, skeletal muscle, kidney, bone marrow, eye, lymph node, smooth muscle, prostate, thymus, stomach and uterus.

It is found in the mitochondrion inner membrane. It catalyses the reaction a 1,2-diacyl-sn-glycero-3-phospho-(1'-sn-glycero-3'-phosphate) + H2O = a 1,2-diacyl-sn-glycero-3-phospho-(1'-sn-glycerol) + phosphate. It carries out the reaction O-phospho-L-tyrosyl-[protein] + H2O = L-tyrosyl-[protein] + phosphate. The catalysed reaction is O-phospho-L-seryl-[protein] + H2O = L-seryl-[protein] + phosphate. The enzyme catalyses O-phospho-L-threonyl-[protein] + H2O = L-threonyl-[protein] + phosphate. It catalyses the reaction 1,2-di-(9Z-octadecenoyl)-sn-glycero-3-phospho-(1'-sn-glycerol-3'-phosphate) + H2O = 1,2-di-(9Z-octadecenoyl)-sn-glycero-3-phospho-(1'-sn-glycerol) + phosphate. It carries out the reaction 1,2-dioctanoyl-sn-glycero-3-phospho-(1D-myo-inositol-5-phosphate) + H2O = 1,2-dioctanoyl-sn-glycero-3-phospho-(1D-myo-inositol) + phosphate. The catalysed reaction is a 1-acyl-2-hexanoyl-sn-glycero-3-phospho-(1D-myo-inositol-5-phosphate) + H2O = a 1-acyl-2-hexanoyl-sn-glycero-3-phospho-(1D-myo-inositol) + phosphate. The enzyme catalyses 1,2-dibutyryl-sn-glycero-3-phospho-(1D-myo-inositol-5-phosphate) + H2O = 1,2-dibutyryl-sn-glycero-3-phospho-(1D-myo-inositol) + phosphate. It functions in the pathway phospholipid metabolism; phosphatidylglycerol biosynthesis; phosphatidylglycerol from CDP-diacylglycerol: step 2/2. In terms of biological role, lipid phosphatase which dephosphorylates phosphatidylglycerophosphate (PGP) to phosphatidylglycerol (PG). PGP is an essential intermediate in the biosynthetic pathway of cardiolipin, a mitochondrial-specific phospholipid regulating the membrane integrity and activities of the organelle. Has also been shown to display phosphatase activity toward phosphoprotein substrates, specifically mediates dephosphorylation of mitochondrial proteins, thereby playing an essential role in ATP production. Has probably a preference for proteins phosphorylated on Ser and/or Thr residues compared to proteins phosphorylated on Tyr residues. Probably involved in regulation of insulin secretion in pancreatic beta cells. May prevent intrinsic apoptosis, probably by regulating mitochondrial membrane integrity. This chain is Phosphatidylglycerophosphatase and protein-tyrosine phosphatase 1, found in Mus musculus (Mouse).